The following is a 300-amino-acid chain: 4-diphosphocytidyl-2-C-methyl-D-erythritol kinase (300 aa).

Lys22 is a catalytic residue. Position 105-115 (Pro105–Ser115) interacts with ATP. The active site involves Asp147.

The protein belongs to the GHMP kinase family. IspE subfamily.

The enzyme catalyses 4-CDP-2-C-methyl-D-erythritol + ATP = 4-CDP-2-C-methyl-D-erythritol 2-phosphate + ADP + H(+). The protein operates within isoprenoid biosynthesis; isopentenyl diphosphate biosynthesis via DXP pathway; isopentenyl diphosphate from 1-deoxy-D-xylulose 5-phosphate: step 3/6. Catalyzes the phosphorylation of the position 2 hydroxy group of 4-diphosphocytidyl-2C-methyl-D-erythritol. In Colwellia psychrerythraea (strain 34H / ATCC BAA-681) (Vibrio psychroerythus), this protein is 4-diphosphocytidyl-2-C-methyl-D-erythritol kinase.